A 235-amino-acid polypeptide reads, in one-letter code: MLTLIVILAVSYLIGSIPTSIIAGKLLRGIDVRDYGSGNAGGTNAFRVLGWKAGLAVTLLDIVKGAVAAISVVVFFEAHPLGAMPDINPVALRLIAGLAAVFGHVFTVFAGFRGGKGVSTAAGMMFGIAPVSTLIVLAVFLLTIFVSRYVSVASIIAAIAFPLVILVRKYLFDLGEGLDYYIRMFNGHVFIHDSLDFHLLIFGMIVAFAIIYTHRANIGRLLSGNENRVTFGRHA.

6 helical membrane passes run 4-24, 56-76, 90-110, 126-146, 152-172, and 191-211; these read LIVILAVSYLIGSIPTSIIAG, AVTLLDIVKGAVAAISVVVFF, VALRLIAGLAAVFGHVFTVFA, FGIAPVSTLIVLAVFLLTIFV, VASIIAAIAFPLVILVRKYLF, and IHDSLDFHLLIFGMIVAFAII.

Belongs to the PlsY family. As to quaternary structure, probably interacts with PlsX.

The protein resides in the cell inner membrane. It catalyses the reaction an acyl phosphate + sn-glycerol 3-phosphate = a 1-acyl-sn-glycero-3-phosphate + phosphate. It functions in the pathway lipid metabolism; phospholipid metabolism. Catalyzes the transfer of an acyl group from acyl-phosphate (acyl-PO(4)) to glycerol-3-phosphate (G3P) to form lysophosphatidic acid (LPA). This enzyme utilizes acyl-phosphate as fatty acyl donor, but not acyl-CoA or acyl-ACP. In Prosthecochloris aestuarii (strain DSM 271 / SK 413), this protein is Glycerol-3-phosphate acyltransferase.